A 773-amino-acid chain; its full sequence is Immunoglobulin domain and leucine-rich repeat-containing protein 2 (773 aa).

An N-terminal signal peptide occupies residues 1-20; it reads MRKFVFFVVAILIQIHTTTS. Topologically, residues 21–493 are extracellular; sequence QRNRSSSPSG…DWYSYDVFNS (473 aa). LRR repeat units lie at residues 52-73, 74-96, 97-120, 122-144, 145-167, and 168-191; these read TRNI…KIYG, SNIQ…IFAP, FPQL…VIHP, LKVL…LLSI, FPKI…DTSN, and TKLK…TLRV. N-linked (GlcNAc...) asparagine glycosylation occurs at Asn-114. A glycan (N-linked (GlcNAc...) asparagine) is linked at Asn-204. LRR repeat units follow at residues 206–230, 233–251, 252–275, and 296–319; these read STKL…DWKF, LRSL…QLDA, PLLN…ILTP, and PSTV…FIPM. The region spanning 349–479 is the Ig-like domain; that stretch reads PVYAQTSIRK…GKDYGIYHFR (131 aa). 2 N-linked (GlcNAc...) asparagine glycosylation sites follow: Asn-361 and Asn-379. An intrachain disulfide couples Cys-396 to Cys-463. The helical transmembrane segment at 494 to 514 threads the bilayer; that stretch reads VFWGGLATSLIVCLISFLLNI. The Cytoplasmic segment spans residues 515 to 773; it reads TWILTRKSAL…RSPDSPPEKR (259 aa). The interval 725–773 is disordered; sequence VRPGIIPTNAPSIRFTTKPTTSSISNEASTSSPSSSGAHRSPDSPPEKR. Positions 733-745 are enriched in polar residues; the sequence is NAPSIRFTTKPTT. The segment covering 746–763 has biased composition (low complexity); it reads SSISNEASTSSPSSSGAH. A compositionally biased stretch (basic and acidic residues) spans 764–773; the sequence is RSPDSPPEKR.

The protein localises to the membrane. This Caenorhabditis elegans protein is Immunoglobulin domain and leucine-rich repeat-containing protein 2.